A 298-amino-acid chain; its full sequence is MSLKLDGKKLSLEIEERLRNYILTNKTIAKRNPGLAVIRIGEDPASGVYVGNKEKACSRVGIKSYIFHLKDTVEQKEVEQLLNKLNLDNNIDGMLLQLPISKKFDEQRLISFINPEKDVDGLNEQNIGKLVKNEQAMRSCTPAGIVNLLKSQNIKIEGKKIVVIGRSLLVGKPLSLMMLNLNATVTITHSKTINLNKICKEADILIAAAGKPNLINSSFVKEGAVIIDVGIHRLTSSDKSKTRLCGDVLLEDVIPKVFAYTPVPGGVGPMTVTMLLVNTIFSWQKQFGLSSTLNDLLP.

NADP(+) is bound by residues G165–S167, S190, and I231.

It belongs to the tetrahydrofolate dehydrogenase/cyclohydrolase family. Homodimer.

The catalysed reaction is (6R)-5,10-methylene-5,6,7,8-tetrahydrofolate + NADP(+) = (6R)-5,10-methenyltetrahydrofolate + NADPH. It carries out the reaction (6R)-5,10-methenyltetrahydrofolate + H2O = (6R)-10-formyltetrahydrofolate + H(+). It participates in one-carbon metabolism; tetrahydrofolate interconversion. Its function is as follows. Catalyzes the oxidation of 5,10-methylenetetrahydrofolate to 5,10-methenyltetrahydrofolate and then the hydrolysis of 5,10-methenyltetrahydrofolate to 10-formyltetrahydrofolate. This Prochlorococcus marinus subsp. pastoris (strain CCMP1986 / NIES-2087 / MED4) protein is Bifunctional protein FolD.